A 233-amino-acid polypeptide reads, in one-letter code: tRNA1(Val) (adenine(37)-N6)-methyltransferase (233 aa).

The protein belongs to the methyltransferase superfamily. tRNA (adenine-N(6)-)-methyltransferase family.

The protein resides in the cytoplasm. It catalyses the reaction adenosine(37) in tRNA1(Val) + S-adenosyl-L-methionine = N(6)-methyladenosine(37) in tRNA1(Val) + S-adenosyl-L-homocysteine + H(+). Specifically methylates the adenine in position 37 of tRNA(1)(Val) (anticodon cmo5UAC). This is tRNA1(Val) (adenine(37)-N6)-methyltransferase from Shewanella amazonensis (strain ATCC BAA-1098 / SB2B).